A 931-amino-acid polypeptide reads, in one-letter code: MGVASSNTAAGGVVPGENINNDETLSNNNKNNNNNNNNNNNNNNNNNNNSSTTTNLLVAADTAIANMASFYQSTLSDDFKLLASENQLPEDLDTFMETLLFSLNFSEESNHNYVYGLLNELSKQLVSNNLKTKNFNRILMHFINKLNLFNQQLITISESMKKNKGSKQQLILDQSVEIQLYTHQQFLVNYTILIQTFSKYIIENMDHVNIIQQFTGDSENSFKTIPFDLILSILGFLSNELRDCSYDLHDVLLRFILILFSTEMYLPLPTIQENYLTDTFTVDFSFYELLAPKTNIFLNILMDTVYNNPNSPIVYSFIFNLFNNIIENKPPPSTSNSLLDSIGSAASYLLLLPLNAYKYFFPQNNATGNSMTELSTFNLLVLVQYNYPKGNPFRKILSNIQDKDFSIDLLNSNPNNHQIRISMQQLYESIIKSPSSDKNILLLYYLLQENSFFFRYVQSRTDLDNLLLPMIQILYNSFEEKPQQVNMILIIILILSQDSLFNENVHSLIVHQILWYKERLLIDVSLGGILMVVLIKSIILNLSKLRDAHLHTNCLAILANLSSNISHIHPYVANRLVKLLEILSKRYIKLKKMLNQVDSPSKINTNNSNNNVKDNTNNITQSMSSVSISDDLSLDVNQLQQIKNLENHNSSINKHHNESHNNSSFLNSPDLNLKELQSEELTTHSEFLYIVLQIINNTLTYRAYSNPHLIYSLLHQQEYFPVFLNEENLSSLSNNILNILSYFSSELKHAINGLSQQETTAETIMSFIESKSKSLPVPPPDQEGILRFKYEEESTSFEFITPYVWSIIFNYSGEKWDTKNITLFPTVDLTTIKSPSVIDANNFTPKKQLSSDQLHSPPTNTTTTTTTTTNSTSSNTILNSMPIPPPNTQLQQQNNLRNQEQNQEENGDEKDDKIEKEQTTGVELSSTEKTN.

Disordered stretches follow at residues 1–53, 599–618, and 839–931; these read MGVA…SSTT, SPSK…NTNN, and DANN…EKTN. G2 carries the N-myristoyl glycine lipid modification. 2 stretches are compositionally biased toward low complexity: residues 27-49 and 601-618; these read NNNK…NNNN and SKIN…NTNN. Residues 839–858 show a composition bias toward polar residues; it reads DANNFTPKKQLSSDQLHSPP. 2 stretches are compositionally biased toward low complexity: residues 859–876 and 889–901; these read TNTT…SSNT and QLQQ…NQEQ. Residues 919–931 are compositionally biased toward polar residues; it reads TTGVELSSTEKTN.

The protein belongs to the dymeclin family.

The sequence is that of Dymeclin (dym) from Dictyostelium discoideum (Social amoeba).